A 393-amino-acid chain; its full sequence is S-adenosylmethionine synthase (393 aa).

Glu-9 contacts Mg(2+). His-15 serves as a coordination point for ATP. Glu-43 provides a ligand contact to K(+). L-methionine-binding residues include Glu-56 and Gln-99. Residues 167-169 (DGK), 235-238 (SGRF), Asp-246, 252-253 (RK), Ala-269, Lys-273, and Lys-277 contribute to the ATP site. Asp-246 contacts L-methionine. Lys-277 provides a ligand contact to L-methionine.

This sequence belongs to the AdoMet synthase family. In terms of assembly, homotetramer. It depends on Mn(2+) as a cofactor. Mg(2+) serves as cofactor. Requires Co(2+) as cofactor. The cofactor is K(+).

The protein resides in the cytoplasm. It catalyses the reaction L-methionine + ATP + H2O = S-adenosyl-L-methionine + phosphate + diphosphate. It participates in amino-acid biosynthesis; S-adenosyl-L-methionine biosynthesis; S-adenosyl-L-methionine from L-methionine: step 1/1. Catalyzes the formation of S-adenosylmethionine from methionine and ATP. The reaction comprises two steps that are both catalyzed by the same enzyme: formation of S-adenosylmethionine (AdoMet) and triphosphate, and subsequent hydrolysis of the triphosphate. The sequence is that of S-adenosylmethionine synthase (SAMS) from Brassica rapa subsp. pekinensis (Chinese cabbage).